We begin with the raw amino-acid sequence, 396 residues long: Elongation factor Tu (396 aa).

Residues 10–206 enclose the tr-type G domain; the sequence is KPHVNVGTIG…ALDNYIPLPE (197 aa). The G1 stretch occupies residues 19–26; the sequence is GHVDHGKT. 19-26 is a binding site for GTP; that stretch reads GHVDHGKT. T26 serves as a coordination point for Mg(2+). Positions 60–64 are G2; the sequence is GITIN. The tract at residues 81-84 is G3; the sequence is DCPG. Residues 81–85 and 136–139 contribute to the GTP site; these read DCPGH and NKCD. Residues 136–139 form a G4 region; that stretch reads NKCD. The G5 stretch occupies residues 174–176; that stretch reads SAK.

The protein belongs to the TRAFAC class translation factor GTPase superfamily. Classic translation factor GTPase family. EF-Tu/EF-1A subfamily. In terms of assembly, monomer.

Its subcellular location is the cytoplasm. The catalysed reaction is GTP + H2O = GDP + phosphate + H(+). Functionally, GTP hydrolase that promotes the GTP-dependent binding of aminoacyl-tRNA to the A-site of ribosomes during protein biosynthesis. This chain is Elongation factor Tu, found in Polaromonas naphthalenivorans (strain CJ2).